The sequence spans 50 residues: Mating-type pheromone BAP1(1) (50 aa).

Residues 1–32 (MDGEGHDINIWGARMSPSPAAAPVSATRGAPW) form a disordered region. The segment covering 16 to 26 (SPSPAAAPVSA) has biased composition (low complexity). Position 47 is a cysteine methyl ester (cysteine 47). The S-farnesyl cysteine moiety is linked to residue cysteine 47. Residues 48–50 (VCH) constitute a propeptide, removed in mature form.

The protein localises to the cell membrane. Functionally, activates B-regulated development. This Schizophyllum commune (Split gill fungus) protein is Mating-type pheromone BAP1(1) (BAP1(1)).